The following is a 281-amino-acid chain: Non-selective voltage-gated ion channel 2 (281 aa).

2 residues coordinate ATP: arginine 11 and arginine 19.

The protein belongs to the eukaryotic mitochondrial porin family.

It is found in the mitochondrion outer membrane. In terms of biological role, non-selective voltage-gated ion channel that mediates the transport of anions and cations through the mitochondrion outer membrane. The channel adopts an open conformation at low or zero membrane potential and a closed conformation at potentials above 30-40 mV. The open state has a weak anion selectivity whereas the closed state is cation-selective. Does not confer permeability to NADH. Its function is as follows. Catalyzes the scrambling of phospholipids across the outer mitochondrial membrane; the mechanism is unrelated to channel activity and is capable of translocating both anionic and zwitterionic phospholipids. This chain is Non-selective voltage-gated ion channel 2 (POR2), found in Saccharomyces cerevisiae (strain ATCC 204508 / S288c) (Baker's yeast).